Consider the following 226-residue polypeptide: NifU-like protein 1, chloroplastic (226 aa).

The N-terminal 76 residues, 1–76 (MQTTTVPMAA…PVTAVQLPLT (76 aa)), are a transit peptide targeting the chloroplast.

This sequence belongs to the NifU family. In terms of assembly, homodimer; disulfide-linked.

It localises to the plastid. Its subcellular location is the chloroplast stroma. Its function is as follows. Molecular scaffold for [Fe-S] cluster assembly of chloroplastic iron-sulfur proteins. The chain is NifU-like protein 1, chloroplastic (NIFU1) from Oryza sativa subsp. japonica (Rice).